Reading from the N-terminus, the 141-residue chain is Large ribosomal subunit protein uL11 (141 aa).

Belongs to the universal ribosomal protein uL11 family. Part of the ribosomal stalk of the 50S ribosomal subunit. Interacts with L10 and the large rRNA to form the base of the stalk. L10 forms an elongated spine to which L12 dimers bind in a sequential fashion forming a multimeric L10(L12)X complex. In terms of processing, one or more lysine residues are methylated.

In terms of biological role, forms part of the ribosomal stalk which helps the ribosome interact with GTP-bound translation factors. This chain is Large ribosomal subunit protein uL11, found in Prochlorococcus marinus subsp. pastoris (strain CCMP1986 / NIES-2087 / MED4).